The following is a 66-amino-acid chain: Small ribosomal subunit protein eS27 (66 aa).

The Zn(2+) site is built by C21, C24, C40, and C43. Residues 21 to 43 form a C4-type zinc finger; sequence CRQCNNEQVIFSNATFPVRCLSC.

It belongs to the eukaryotic ribosomal protein eS27 family. As to quaternary structure, part of the 30S ribosomal subunit. It depends on Zn(2+) as a cofactor.

This is Small ribosomal subunit protein eS27 from Sulfolobus acidocaldarius (strain ATCC 33909 / DSM 639 / JCM 8929 / NBRC 15157 / NCIMB 11770).